The primary structure comprises 407 residues: [Pyruvate dehydrogenase (acetyl-transferring)] kinase isozyme 2, mitochondrial (407 aa).

The 230-residue stretch at 135–364 folds into the Histidine kinase domain; it reads LEYKDTYGDD…DAVIYLKALS (230 aa). Phosphotyrosine is present on residues Tyr215 and Tyr216. Residues 251-258, Asp290, 309-310, and 325-330 contribute to the ATP site; these read ELFKNAMR, ST, and GFGYGL. The residue at position 376 (Lys376) is an N6-succinyllysine.

The protein belongs to the PDK/BCKDK protein kinase family. In terms of assembly, homodimer, and heterodimer with PDK1. Interacts with the pyruvate dehydrogenase complex subunit DLAT, and is part of the multimeric pyruvate dehydrogenase complex that contains multiple copies of pyruvate dehydrogenase (E1), dihydrolipoamide acetyltransferase (DLAT, E2) and lipoamide dehydrogenase (DLD, E3). Detected in heart (at protein level). Highest level of expression in heart and skeletal muscle and the lowest in spleen and lung. Liver, kidney, brain and testis levels are intermediate.

The protein resides in the mitochondrion matrix. It catalyses the reaction L-seryl-[pyruvate dehydrogenase E1 alpha subunit] + ATP = O-phospho-L-seryl-[pyruvate dehydrogenase E1 alpha subunit] + ADP + H(+). With respect to regulation, activity increases in response to increased acetyl-CoA and NADH levels and upon binding to the pyruvate dehydrogenase subunit DLAT. Inhibited by ADP and pyruvate; these compounds interfere with DLAT binding and thereby inhibit kinase activity. Inhibited by dichloroacetate. Inhibited by AZD7545; this compound interferes with DLAT binding and thereby inhibits kinase activity. Reactive oxygen species cause the formation of disulfide bonds, and thereby inhibit the enzyme. Its function is as follows. Kinase that plays a key role in the regulation of glucose and fatty acid metabolism and homeostasis via phosphorylation of the pyruvate dehydrogenase subunits PDHA1 and PDHA2. This inhibits pyruvate dehydrogenase activity, and thereby regulates metabolite flux through the tricarboxylic acid cycle, down-regulates aerobic respiration and inhibits the formation of acetyl-coenzyme A from pyruvate. Inhibition of pyruvate dehydrogenase decreases glucose utilization and increases fat metabolism. Mediates cellular responses to insulin. Plays an important role in maintaining normal blood glucose levels and in metabolic adaptation to nutrient availability. Via its regulation of pyruvate dehydrogenase activity, plays an important role in maintaining normal blood pH and in preventing the accumulation of ketone bodies under starvation. Plays a role in the regulation of cell proliferation and in resistance to apoptosis under oxidative stress. Plays a role in p53/TP53-mediated apoptosis. In Rattus norvegicus (Rat), this protein is [Pyruvate dehydrogenase (acetyl-transferring)] kinase isozyme 2, mitochondrial (Pdk2).